Here is a 198-residue protein sequence, read N- to C-terminus: Nudix hydrolase 21, chloroplastic (198 aa).

The N-terminal 37 residues, 1–37 (MISLFISNFSNLSNLSPTFDNMNMNIPSKKIVPVPTP), are a transit peptide targeting the chloroplast. The Nudix hydrolase domain maps to 59–191 (GYRQVVGCVP…WMREALEAFI (133 aa)). The short motif at 98–119 (GGWEIDESIEEAALRETIEEAG) is the Nudix box element. Residues glutamate 113 and glutamate 117 each contribute to the Mg(2+) site.

Belongs to the Nudix hydrolase family. Requires Mg(2+) as cofactor. It depends on Mn(2+) as a cofactor. As to expression, expressed in roots, leaves, stems and inflorescences.

It is found in the plastid. Its subcellular location is the chloroplast. In terms of biological role, probably mediates the hydrolysis of some nucleoside diphosphate derivatives. This is Nudix hydrolase 21, chloroplastic (NUDT21) from Arabidopsis thaliana (Mouse-ear cress).